The following is a 190-amino-acid chain: Large ribosomal subunit protein uL5 (190 aa).

The protein belongs to the universal ribosomal protein uL5 family. Part of the 50S ribosomal subunit; part of the 5S rRNA/L5/L18/L25 subcomplex. Contacts the 5S rRNA and the P site tRNA. Forms a bridge to the 30S subunit in the 70S ribosome.

This is one of the proteins that bind and probably mediate the attachment of the 5S RNA into the large ribosomal subunit, where it forms part of the central protuberance. In the 70S ribosome it contacts protein S13 of the 30S subunit (bridge B1b), connecting the 2 subunits; this bridge is implicated in subunit movement. Contacts the P site tRNA; the 5S rRNA and some of its associated proteins might help stabilize positioning of ribosome-bound tRNAs. The polypeptide is Large ribosomal subunit protein uL5 (Bifidobacterium longum (strain DJO10A)).